The sequence spans 138 residues: Basic phospholipase A2 ammodytoxin A (138 aa).

The signal sequence occupies residues 1–16 (MRTLWIVAVCLIGVEG). 7 cysteine pairs are disulfide-bonded: Cys42–Cys131, Cys44–Cys60, Cys59–Cys111, Cys65–Cys138, Cys66–Cys104, Cys73–Cys97, and Cys91–Cys102. Ca(2+) contacts are provided by Tyr43, Gly45, and Gly47. His63 is an active-site residue. A Ca(2+)-binding site is contributed by Asp64. The active site involves Asp105.

This sequence belongs to the phospholipase A2 family. Group II subfamily. D49 sub-subfamily. Monomer. Binds to calmodulin, coagulation factor X (F10), M-type PLA2 receptor (R-180). May also bind to 14-3-3 proteins gamma (YWHAG) and epsilon (YWHAE), and R25, a mitochondrial membrane protein. The cofactor is Ca(2+). As to expression, expressed by the venom gland.

Its subcellular location is the secreted. It is found in the host cytoplasm. It localises to the host cytosol. It carries out the reaction a 1,2-diacyl-sn-glycero-3-phosphocholine + H2O = a 1-acyl-sn-glycero-3-phosphocholine + a fatty acid + H(+). Its function is as follows. Snake venom phospholipase A2 (PLA2) that acts as a presynaptic neurotoxin, an inhibitor of blood coagulation, and has been found to bind with high affinity to intracellular proteins. The response of indirectly stimulated neuromuscular preparations to ammodytoxin (Atx) is triphasic. The first phase, the transient inhibition of the acetylcholine (ACh) release, starts soon after the addition of Atx and lasts for several minutes. This phase is probably independent of Atx enzymatic activity. The effect may be due to the specific binding of the toxin to presynaptic receptors. These receptors, called N-type receptors, are still unidentified. It is noteworthy that a neuronal isoform of the M-type PLA2 receptor (R180) has been identified as a high-affinity receptor for Atx in neuronal plasma membranes. It was demonstrated however that this receptor is not essential for expression of neurotoxicity by Atx. The second phase corresponds to an augmentation of neurotransmitter release. A peak is reached 10-20 minutes after exposure of the preparation to Atx and is followed by a gradual reduction. In this phase, the enzymatic activity of Atx of the mammalian is not significant. It is speculated that the increased release of neurotransmitter in this phase is induced by the interference of Atx with voltage-gated potassium channels. Measurements of ionic currents showed however that voltage-gated potassium channels are not affected by Atx. The third phase of the response of neuromuscular preparations to Atx, which corresponds to a complete and irreversible paralysis, is clearly dependent on the hydrolytic activity of the toxin. In addition to its presynaptic neurotoxicity, Atx shows an anticoagulant activity by binding with high affinity to activated coagulation factor X (F10) thus inhibiting the formation of the prothrombinase complex (FX/FV) and its activity (IC(50) is 20 nM). Surprisingly, Atx was discovered to bind intracellular proteins such as calmodulin (CaM) (IC(50) is 6 nM), 14-3-3 proteins gamma (YWHAG) and epsilon (YWHAE) (by similarity with AtxC), as well as R25 (by similarity with AtxC), a mitochondrial integral membrane protein found in cerebral cortex. These findings raised a doubt about the dogma of the exclusively extracellular action of PLA2s, defended by the potential instability of these molecules in the reducing environment of the eukaryotic cytosol coupled with their possible inability to act as enzymes in this cellular compartment, due to too low concentration of calcium ions. This hypothesis was challenged efficiently by demonstrating the internalization of AtxA into a culture cells, but still remains to be directly demonstrated in vivo. PLA2 catalyzes the calcium-dependent hydrolysis of the 2-acyl groups in 3-sn-phosphoglycerides. This Vipera ammodytes ammodytes (Western sand viper) protein is Basic phospholipase A2 ammodytoxin A.